The following is a 387-amino-acid chain: Gamma-butyrobetaine dioxygenase (387 aa).

Zn(2+) is bound by residues C38, C40, C43, and H82. Positions 202, 204, and 347 each coordinate Fe cation. S351 carries the post-translational modification Phosphoserine.

It belongs to the gamma-BBH/TMLD family. Requires Fe(2+) as cofactor. L-ascorbate serves as cofactor. In terms of tissue distribution, expressed in the liver and in some extend in the testis and the epididymis.

The protein resides in the cytoplasm. The catalysed reaction is 4-(trimethylamino)butanoate + 2-oxoglutarate + O2 = carnitine + succinate + CO2. Its pathway is amine and polyamine biosynthesis; carnitine biosynthesis. Functionally, catalyzes the formation of L-carnitine from gamma-butyrobetaine. The sequence is that of Gamma-butyrobetaine dioxygenase (Bbox1) from Rattus norvegicus (Rat).